We begin with the raw amino-acid sequence, 112 residues long: Signal recognition particle 19 kDa protein (112 aa).

Belongs to the SRP19 family. In terms of assembly, part of the signal recognition particle protein translocation system, which is composed of SRP and FtsY. Archaeal SRP consists of a 7S RNA molecule of 300 nucleotides and two protein subunits: SRP54 and SRP19.

It is found in the cytoplasm. Functionally, involved in targeting and insertion of nascent membrane proteins into the cytoplasmic membrane. Binds directly to 7S RNA and mediates binding of the 54 kDa subunit of the SRP. The chain is Signal recognition particle 19 kDa protein from Aeropyrum pernix (strain ATCC 700893 / DSM 11879 / JCM 9820 / NBRC 100138 / K1).